The chain runs to 1124 residues: tRNA (34-2'-O)-methyltransferase regulator WDR6 (1124 aa).

M1 is modified (N-acetylmethionine). WD repeat units lie at residues 53-97 (MKRV…IVKI), 105-143 (RELW…LYDP), 147-189 (CSLQ…VWYP), 200-238 (VPDR…IWKV), 247-285 (RVQN…VWSH), 289-327 (ILQA…LWHL), 335-376 (SGVF…LYDL), 381-422 (WEQL…VVPI), 425-470 (PTAA…ISAA), 476-520 (IFVK…LYPS), 557-596 (PMST…FVRG), 602-640 (VLRQ…VWSP), 643-682 (HEKL…LYRA), 743-789 (LIDI…VWGV), 852-897 (RHRH…LFLL), 905-950 (QLLA…FWDL), 974-1015 (GSPC…VFVL), 1039-1076 (EEYS…FWRL), and 1082-1124 (TFMN…NWYD).

Belongs to the WD repeat WDR6 family. In terms of assembly, interacts with FTSJ1; the interaction is direct, and required for 2'-O-methylation of position 34 in substrate tRNAs. Interacts with IRS4. Interacts with STK11/LKB1.

The protein resides in the cytoplasm. Functionally, together with methyltransferase FTSJ1, methylates the 2'-O-ribose of nucleotides at position 34 of the tRNA anticodon loop of substrate tRNAs. Required for the correct positioning of the substrate tRNA for methylation. Required to suppress amino acid starvation-induced autophagy. Enhances the STK11/LKB1-induced cell growth suppression activity. The polypeptide is tRNA (34-2'-O)-methyltransferase regulator WDR6 (WDR6) (Bos taurus (Bovine)).